Here is a 493-residue protein sequence, read N- to C-terminus: 3-octaprenyl-4-hydroxybenzoate carboxy-lyase (493 aa).

N172 provides a ligand contact to Mn(2+). Prenylated FMN contacts are provided by residues 175–177, 189–191, and 194–195; these read IYR, RWL, and RG. Mn(2+) is bound at residue E238. The Proton donor role is filled by D287.

This sequence belongs to the UbiD family. In terms of assembly, homohexamer. Prenylated FMN serves as cofactor. Requires Mn(2+) as cofactor.

It is found in the cell membrane. It carries out the reaction a 4-hydroxy-3-(all-trans-polyprenyl)benzoate + H(+) = a 2-(all-trans-polyprenyl)phenol + CO2. It functions in the pathway cofactor biosynthesis; ubiquinone biosynthesis. In terms of biological role, catalyzes the decarboxylation of 3-octaprenyl-4-hydroxy benzoate to 2-octaprenylphenol, an intermediate step in ubiquinone biosynthesis. This is 3-octaprenyl-4-hydroxybenzoate carboxy-lyase from Cellvibrio japonicus (strain Ueda107) (Pseudomonas fluorescens subsp. cellulosa).